Consider the following 880-residue polypeptide: MSEKNIKGIKFGILSPDEIRKMSVTAIITPDVYDEDGTPIEGSVMDPRLGVIEPGQKCPTCGNTLGNCPGHFGHIELVRPVIHVGFVKHVYEFLKATCRRCGRVKISEDEIEKYSRIYNAIKKRWPSAARRLTEYVKKTAMKAQVCPHCGEKQFKIKLEKPYNFYEERKEGVAKLTPSDIRERLEKVPESDVEILGYDPTTSRPEWMILTVLPVPPITIRPSIMIESGIRAEDDLTHKLVDIVRINERLKESIDAGAPQLIIEDLWDLLQYHVATYFDNEIPGLPPSKHRSGRPLRTLAQRLKGKEGRFRGNLSGKRVDFSSRTVISPDPNISIDEVGVPEIIARTLTVPERITPWNIEKLRQFVINGPDKWPGANYVIRPDGRRIDLRYVKDRKELASTLAPGYVVERHLTDGDVVLFNRQPSLHRISMMAHRVRVLKGLTFRLNLLVCPPYNADFDGDEMNLHVPQSEEAIAEAKEIMLVHKNIITPRYGGPIIGAAQDYISGAYLLTVKTTLLTKEEAQQILGVADVKIDLGEPAILAPREYYTGKQVVSAFLPKDFNFHGQANVSSGPRLCKNEDCPHDSYVVIKNGILLEGVFDKKAIGNQQPESILHWLIKEYSDEYGKWLMDNLFRVFIRFVELQGFTMRLEDVSLGDDVKKEIYNEIDRAKVEVDNLIQKYKNGELEPIPGRTLEESLENYILDTLDKLRSTAGDIASKYLDPFNFAYVMARTGARGSVLNITQMAAMLGQQSVRGERIKRGYMTRTLPHFKPYDISPEARGFIYSSFRTGLKPTELFFHAAGGREGLVDTAVRTSQSGYMQRRLINALSDLRAEYDGTVRSLYGEVIQVAYGDDGVFPMYSAHGKTVDVNRIFERVVGWKT.

The Zn(2+) site is built by Cys58, Cys61, Cys68, and His71. Residues Lys88 and 92 to 95 (EFLK) each bind dsDNA. Positions 98 and 101 each coordinate Zn(2+). Residue Lys138 participates in dsDNA binding. Cys146 and Cys149 together coordinate Zn(2+). DsDNA is bound by residues Lys303, 305 to 310 (KEGRFR), Arg323, and Gln422. Mg(2+) is bound by residues Asp456, Asp458, and Asp460. The Zn(2+) site is built by Arg573, Cys575, Cys580, and His582. Residues 812–822 (RTSQSGYMQRR) and Gln815 each bind dsDNA.

Belongs to the RNA polymerase beta' chain family. In terms of assembly, part of the 13-subunit RNA polymerase complex. Rpo1N and Rpo5 form a cleft which docks Rpo13. Interacts with Rpo8 on the periphery of the clamp head. It depends on Mg(2+) as a cofactor. Requires Zn(2+) as cofactor.

The protein localises to the cytoplasm. The enzyme catalyses RNA(n) + a ribonucleoside 5'-triphosphate = RNA(n+1) + diphosphate. In terms of biological role, DNA-dependent RNA polymerase (RNAP) catalyzes the transcription of DNA into RNA using the four ribonucleoside triphosphates as substrates. Forms the clamp head domain. This Saccharolobus shibatae (strain ATCC 51178 / DSM 5389 / JCM 8931 / NBRC 15437 / B12) (Sulfolobus shibatae) protein is DNA-directed RNA polymerase subunit Rpo1N.